A 374-amino-acid polypeptide reads, in one-letter code: N5-carboxyaminoimidazole ribonucleotide synthase (374 aa).

Residues Arg108, Lys148, 153–159 (GYDGKGQ), 183–186 (EKYL), Glu191, His214, and 266–267 (NE) contribute to the ATP site. The region spanning 112-296 (KETLKSAGTK…QFDTHILAVT (185 aa)) is the ATP-grasp domain.

It belongs to the PurK/PurT family. Homodimer.

The catalysed reaction is 5-amino-1-(5-phospho-beta-D-ribosyl)imidazole + hydrogencarbonate + ATP = 5-carboxyamino-1-(5-phospho-D-ribosyl)imidazole + ADP + phosphate + 2 H(+). It functions in the pathway purine metabolism; IMP biosynthesis via de novo pathway; 5-amino-1-(5-phospho-D-ribosyl)imidazole-4-carboxylate from 5-amino-1-(5-phospho-D-ribosyl)imidazole (N5-CAIR route): step 1/2. In terms of biological role, catalyzes the ATP-dependent conversion of 5-aminoimidazole ribonucleotide (AIR) and HCO(3)(-) to N5-carboxyaminoimidazole ribonucleotide (N5-CAIR). In Staphylococcus aureus (strain MSSA476), this protein is N5-carboxyaminoimidazole ribonucleotide synthase.